Consider the following 204-residue polypeptide: Superoxide dismutase [Mn] (204 aa).

His27 serves as a coordination point for Mn(2+). A phosphothreonine mark is found at Thr34 and Thr70. Mn(2+) contacts are provided by His82, Asp164, and His168.

Belongs to the iron/manganese superoxide dismutase family. As to quaternary structure, homodimer. Requires Mn(2+) as cofactor.

The enzyme catalyses 2 superoxide + 2 H(+) = H2O2 + O2. Functionally, destroys superoxide anion radicals which are normally produced within the cells and which are toxic to biological systems. The polypeptide is Superoxide dismutase [Mn] (sodA) (Geobacillus stearothermophilus (Bacillus stearothermophilus)).